The following is a 102-amino-acid chain: Putative septation protein SpoVG (102 aa).

Residues 83-102 (TDEVIPDKNATSDNEESDEA) are disordered.

The protein belongs to the SpoVG family.

Its function is as follows. Could be involved in septation. The polypeptide is Putative septation protein SpoVG (Staphylococcus epidermidis (strain ATCC 35984 / DSM 28319 / BCRC 17069 / CCUG 31568 / BM 3577 / RP62A)).